Here is a 91-residue protein sequence, read N- to C-terminus: Small ribosomal subunit protein bS20 (91 aa).

The segment at 1 to 25 is disordered; the sequence is MANSPSAKKRAKQAEKRRSHNASLR. Positions 7–20 are enriched in basic residues; the sequence is AKKRAKQAEKRRSH.

Belongs to the bacterial ribosomal protein bS20 family.

In terms of biological role, binds directly to 16S ribosomal RNA. This Azotobacter vinelandii (strain DJ / ATCC BAA-1303) protein is Small ribosomal subunit protein bS20.